The chain runs to 692 residues: Elongation factor G (692 aa).

The tr-type G domain maps to 8 to 283 (EKVRNIGIAA…AVVDYLPAPT (276 aa)). GTP-binding positions include 17 to 24 (AHIDAGKT), 81 to 85 (DTPGH), and 135 to 138 (NKMD).

It belongs to the TRAFAC class translation factor GTPase superfamily. Classic translation factor GTPase family. EF-G/EF-2 subfamily.

The protein resides in the cytoplasm. Its function is as follows. Catalyzes the GTP-dependent ribosomal translocation step during translation elongation. During this step, the ribosome changes from the pre-translocational (PRE) to the post-translocational (POST) state as the newly formed A-site-bound peptidyl-tRNA and P-site-bound deacylated tRNA move to the P and E sites, respectively. Catalyzes the coordinated movement of the two tRNA molecules, the mRNA and conformational changes in the ribosome. The protein is Elongation factor G of Nitratiruptor sp. (strain SB155-2).